We begin with the raw amino-acid sequence, 97 residues long: Coiled-coil domain-containing protein 167 (97 aa).

A coiled-coil region spans residues 10–79; sequence GVALEIDGLE…LRQENRKNML (70 aa). Residues 77-97 traverse the membrane as a helical segment; that stretch reads NMLLSVAIFLLLTVIYAYWAL.

The protein localises to the membrane. The protein is Coiled-coil domain-containing protein 167 (CCDC167) of Bos taurus (Bovine).